The following is a 116-amino-acid chain: uncharacterized protein (116 aa).

This is an uncharacterized protein from Schizosaccharomyces pombe (strain 972 / ATCC 24843) (Fission yeast).